A 370-amino-acid chain; its full sequence is Histidinol-phosphate aminotransferase 1 (370 aa).

Lys222 carries the N6-(pyridoxal phosphate)lysine modification.

Belongs to the class-II pyridoxal-phosphate-dependent aminotransferase family. Histidinol-phosphate aminotransferase subfamily. As to quaternary structure, homodimer. Pyridoxal 5'-phosphate is required as a cofactor.

It catalyses the reaction L-histidinol phosphate + 2-oxoglutarate = 3-(imidazol-4-yl)-2-oxopropyl phosphate + L-glutamate. It functions in the pathway amino-acid biosynthesis; L-histidine biosynthesis; L-histidine from 5-phospho-alpha-D-ribose 1-diphosphate: step 7/9. In Bacillus anthracis, this protein is Histidinol-phosphate aminotransferase 1 (hisC1).